We begin with the raw amino-acid sequence, 316 residues long: Methionyl-tRNA formyltransferase (316 aa).

Residue 112–115 (SLLP) coordinates (6S)-5,6,7,8-tetrahydrofolate.

Belongs to the Fmt family.

The enzyme catalyses L-methionyl-tRNA(fMet) + (6R)-10-formyltetrahydrofolate = N-formyl-L-methionyl-tRNA(fMet) + (6S)-5,6,7,8-tetrahydrofolate + H(+). Its function is as follows. Attaches a formyl group to the free amino group of methionyl-tRNA(fMet). The formyl group appears to play a dual role in the initiator identity of N-formylmethionyl-tRNA by promoting its recognition by IF2 and preventing the misappropriation of this tRNA by the elongation apparatus. In Actinobacillus pleuropneumoniae serotype 7 (strain AP76), this protein is Methionyl-tRNA formyltransferase.